A 688-amino-acid chain; its full sequence is MSEDKYCLVTGGAGYIGSHTVVELCEAGYKCIVVDNLSNSSYESVARMELLTGQEIKFAKIDLCELEPLNKLFDDYKIDSVLHFAGLKAVGESTQIPLTYYFNNIVGTINLLECMKSHDVKKLVFSSSATVYGDATRFENMIPIPETCPTGPTNPYGKTKLTIEDMMRDLHFSDKSFSFAILRYFNPIGAHPSGVIGEDPLGIPNNLLPFMAQVAIGRRPKLYVFGDDYDSVDGTPIRDYIHVVDLAKGHLAALKYLEKYAGTCREWNLGTGHGTTVLQMYRAFCDAIGFNFEYVVTARRDGDVLNLTAKCDRATNELEWKTELDVNKACVDLWKWTQDNPFGYQIKGVDSKFFGDKGDFSSRVVSLGKGTSFEVKLANLGATIVDIVVNGCSVVASLDNETEYKDQSNPFFGATVGPYANRIANGTFEINGKRIQLTVSKEDGNVVHSGINSYHSKKFLGPIVKNPEAHIWTADFKYVDEETEFPARLSTLVRYKVDSEKKTLTVEYESKVAGQGSTGANITNHTYFNLNKFNEATIKGSKVQLIDNTGLEVNNKLLPTGNLKKYTQVATFNDSPTEITEKEPVLDFCFVSGLPAKLDTRSSPLTPVFKLSNEDAKLEVEVATTEPTFQVYTGDYVDVKDKYENRAGICCEPGRYIDAVNNPEWKSSVVLPAGETYGHKLSYTFRTL.

A galactowaldenase region spans residues 1 to 346 (MSEDKYCLVT…TQDNPFGYQI (346 aa)). An NAD(+)-binding site is contributed by 6–37 (YCLVTGGAGYIGSHTVVELCEAGYKCIVVDNL). The tract at residues 347–688 (KGVDSKFFGD…HKLSYTFRTL (342 aa)) is mutarotase. The For mutarotase activity role is filled by His-525.

It in the N-terminal section; belongs to the NAD(P)-dependent epimerase/dehydratase family. This sequence in the C-terminal section; belongs to the aldose epimerase family. The cofactor is NAD(+).

It carries out the reaction UDP-alpha-D-glucose = UDP-alpha-D-galactose. It catalyses the reaction alpha-D-glucose = beta-D-glucose. It functions in the pathway carbohydrate metabolism; galactose metabolism. Its pathway is carbohydrate metabolism; hexose metabolism. In terms of biological role, mutarotase converts alpha-aldose to the beta-anomer. It is active on D-glucose, L-arabinose, D-xylose, D-galactose, maltose and lactose. The protein is Bifunctional protein GAL10 (GAL10) of Kluyveromyces lactis (strain ATCC 8585 / CBS 2359 / DSM 70799 / NBRC 1267 / NRRL Y-1140 / WM37) (Yeast).